Here is a 356-residue protein sequence, read N- to C-terminus: MEDAAAAARRMERLASHLRPPASQMEESPLLRGSNCRAKGAAPGFKVAILGASGGIGQPLALLMKMNPLVSVLHLYDVVNTPGVTADISHMNTGAVVRGFLGQPQLENALTGMDLVIIPAGVPRKPGMTRDDLFNINAGIVRTLCEGIAKCCPNAIVNVISNPVNSTVPIAAEVFKKAGTYDPKRLLGVTTLDVVRANTFVAEVLGLDPRDVNVPVIGGHAGVTILPLLSQVNPPCSFTSEEISYLTTRIQNGGTEVVEAKAGAGSATLSMAYAASKFADACLRGLRGDAGIVECSFVASQVTELPFFASKVRLGRCGIEEILSLGPLNEFERAGLEKAKKELAESIQKGVAFINK.

A glyoxysome-targeting transit peptide spans 1 to 36 (MEDAAAAARRMERLASHLRPPASQMEESPLLRGSNC). NAD(+)-binding positions include 51-57 (GASGGIG) and Asp77. Arg124 and Arg130 together coordinate substrate. NAD(+) contacts are provided by residues Asn137 and 160–162 (ISN). Substrate contacts are provided by Asn162 and Arg196. The active-site Proton acceptor is His220. Met271 lines the NAD(+) pocket.

It belongs to the LDH/MDH superfamily. MDH type 1 family. Homodimer.

It is found in the glyoxysome. It catalyses the reaction (S)-malate + NAD(+) = oxaloacetate + NADH + H(+). The protein is Malate dehydrogenase, glyoxysomal of Oryza sativa subsp. japonica (Rice).